The sequence spans 515 residues: Envelope glycoprotein (515 aa).

An N-terminal signal peptide occupies residues 1–33; that stretch reads MPKERRSRRRPQPIIRWVSLTLTLLSLCQPIQT. Topologically, residues 34–435 are extracellular; sequence WRCSLSLGNQ…LGLTAWVRET (402 aa). Asn-129 and Asn-203 each carry an N-linked (GlcNAc...) asparagine; by host glycan. Residues 212–215 carry the CXXC motif; sequence CAIC. 3 cysteine pairs are disulfide-bonded: Cys-212/Cys-215, Cys-212/Cys-392, and Cys-384/Cys-391. N-linked (GlcNAc...) asparagine; by host glycosylation is found at Asn-230, Asn-251, Asn-256, Asn-271, and Asn-287. Residues 304–324 form a fusion peptide region; sequence AAALTLGLALSVGLTGINVAV. Coiled-coil stretches lie at residues 330-376 and 388-420; these read QRLT…WLYI and NEPCCFLRIQNDSIIRLGDLQPLSQRVSTDWQW. An N-linked (GlcNAc...) asparagine; by host glycan is attached at Asn-351. The immunosuppression stretch occupies residues 365–381; sequence AQNRRGLDWLYIRLGFQ. The CX6CC motif lies at 384–392; that stretch reads CPTINEPCC. The N-linked (GlcNAc...) asparagine; by host glycan is linked to Asn-398. The helical transmembrane segment at 436–456 threads the bilayer; sequence IHSVLSLFLLALFLLFLAPCL. Cys-455 carries the S-palmitoyl cysteine; by host lipid modification. The Cytoplasmic segment spans residues 457–515; that stretch reads IKCLTSRLLKLLRQAPHFPEISLAPKPDSDYQALLPSAPEIYSHLSPTKPDYINLRPCP.

As to quaternary structure, the mature envelope protein (Env) consists of a trimer of SU-TM heterodimers attached by a labile interchain disulfide bond. In terms of processing, specific enzymatic cleavages in vivo yield mature proteins. Envelope glycoproteins are synthesized as an inactive precursor that is N-glycosylated and processed likely by host cell furin or by a furin-like protease in the Golgi to yield the mature SU and TM proteins. The cleavage site between SU and TM requires the minimal sequence [KR]-X-[KR]-R. The CXXC motif is highly conserved across a broad range of retroviral envelope proteins. It is thought to participate in the formation of a labile disulfide bond possibly with the CX6CC motif present in the transmembrane protein. Isomerization of the intersubunit disulfide bond to an SU intrachain disulfide bond is thought to occur upon receptor recognition in order to allow membrane fusion. Post-translationally, the transmembrane protein is palmitoylated.

Its subcellular location is the virion membrane. The protein localises to the host cell membrane. Its function is as follows. The surface protein (SU) attaches the virus to the host cell by binding to its receptor. This interaction triggers the refolding of the transmembrane protein (TM) and is thought to activate its fusogenic potential by unmasking its fusion peptide. Fusion occurs at the host cell plasma membrane. The transmembrane protein (TM) acts as a class I viral fusion protein. Under the current model, the protein has at least 3 conformational states: pre-fusion native state, pre-hairpin intermediate state, and post-fusion hairpin state. During viral and target cell membrane fusion, the coiled coil regions (heptad repeats) assume a trimer-of-hairpins structure, positioning the fusion peptide in close proximity to the C-terminal region of the ectodomain. The formation of this structure appears to drive apposition and subsequent fusion of viral and target cell membranes. Membranes fusion leads to delivery of the nucleocapsid into the cytoplasm. The protein is Envelope glycoprotein (env) of Bovine leukemia virus (isolate Belgium LB285) (BLV).